Reading from the N-terminus, the 434-residue chain is Glutamyl-tRNA reductase (434 aa).

Substrate is bound by residues threonine 54–arginine 57, serine 113, glutamate 118–glutamine 120, and glutamine 124. The active-site Nucleophile is cysteine 55. Glycine 193 to serine 198 provides a ligand contact to NADP(+).

It belongs to the glutamyl-tRNA reductase family. Homodimer.

The catalysed reaction is (S)-4-amino-5-oxopentanoate + tRNA(Glu) + NADP(+) = L-glutamyl-tRNA(Glu) + NADPH + H(+). The protein operates within porphyrin-containing compound metabolism; protoporphyrin-IX biosynthesis; 5-aminolevulinate from L-glutamyl-tRNA(Glu): step 1/2. It functions in the pathway porphyrin-containing compound metabolism; chlorophyll biosynthesis. Its function is as follows. Catalyzes the NADPH-dependent reduction of glutamyl-tRNA(Glu) to glutamate 1-semialdehyde (GSA). The sequence is that of Glutamyl-tRNA reductase from Chloroflexus aurantiacus (strain ATCC 29366 / DSM 635 / J-10-fl).